Reading from the N-terminus, the 338-residue chain is NADPH dehydrogenase (338 aa).

An FMN-binding site is contributed by 22 to 25 (SPMC). Residue tyrosine 27 participates in substrate binding. 2 residues coordinate FMN: alanine 59 and glutamine 101. Residue 163-166 (HAAH) participates in substrate binding. Residues arginine 214 and 306–307 (GR) each bind FMN.

Belongs to the NADH:flavin oxidoreductase/NADH oxidase family. NamA subfamily. In terms of assembly, homotetramer. Requires FMN as cofactor.

The catalysed reaction is A + NADPH + H(+) = AH2 + NADP(+). Catalyzes the reduction of the double bond of an array of alpha,beta-unsaturated aldehydes and ketones. It also reduces the nitro group of nitroester and nitroaromatic compounds. It could have a role in detoxification processes. The chain is NADPH dehydrogenase from Listeria innocua serovar 6a (strain ATCC BAA-680 / CLIP 11262).